The primary structure comprises 692 residues: Peroxisomal primary amine oxidase (692 aa).

The segment covering 1–22 has biased composition (low complexity); it reads MERLRQIASQATAASAAPARPA. A disordered region spans residues 1–26; the sequence is MERLRQIASQATAASAAPARPAHPLD. Asparagine 243 is a glycosylation site (N-linked (GlcNAc...) asparagine). Residue 317–328 participates in substrate binding; it reads ALDIGEYGAGYM. The Proton acceptor role is filled by aspartate 319. A disulfide bond links cysteine 338 and cysteine 364. Substrate is bound at residue 402-407; it reads AANYEY. Catalysis depends on tyrosine 405, which acts as the Schiff-base intermediate with substrate; via topaquinone. 2',4',5'-topaquinone is present on tyrosine 405. Histidine 456 and histidine 458 together coordinate Cu cation. Residues aspartate 465, aspartate 613, and isoleucine 614 each contribute to the Mn(2+) site. Histidine 624 provides a ligand contact to Cu cation.

It belongs to the copper/topaquinone oxidase family. In terms of assembly, homodimer. Cu cation is required as a cofactor. Zn(2+) serves as cofactor. Requires L-topaquinone as cofactor. The cofactor is Mn(2+). Topaquinone (TPQ) is generated by copper-dependent autoxidation of a specific tyrosyl residue.

It localises to the peroxisome. The enzyme catalyses a primary methyl amine + O2 + H2O = an aldehyde + H2O2 + NH4(+). The sequence is that of Peroxisomal primary amine oxidase (AMO) from Pichia angusta (Yeast).